Here is a 322-residue protein sequence, read N- to C-terminus: Putative DNA-directed RNA polymerase subunit alpha-like 2 (322 aa).

The alpha N-terminal domain (alpha-NTD) stretch occupies residues M1–E232. Residues E280–F322 form an alpha C-terminal domain (alpha-CTD) region.

The protein belongs to the RNA polymerase alpha chain family. In terms of assembly, in plastids the minimal PEP RNA polymerase catalytic core is composed of four subunits: alpha, beta, beta', and beta''. When a (nuclear-encoded) sigma factor is associated with the core the holoenzyme is formed, which can initiate transcription.

The protein resides in the plastid. The protein localises to the chloroplast. The catalysed reaction is RNA(n) + a ribonucleoside 5'-triphosphate = RNA(n+1) + diphosphate. Functionally, DNA-dependent RNA polymerase catalyzes the transcription of DNA into RNA using the four ribonucleoside triphosphates as substrates. The sequence is that of Putative DNA-directed RNA polymerase subunit alpha-like 2 (rpoAL2-A) from Pelargonium hortorum (Common geranium).